The sequence spans 156 residues: Ribosomal RNA large subunit methyltransferase H (156 aa).

S-adenosyl-L-methionine contacts are provided by residues glycine 104 and 123–128; that span reads LSAMTL.

Belongs to the RNA methyltransferase RlmH family. As to quaternary structure, homodimer.

It localises to the cytoplasm. It carries out the reaction pseudouridine(1915) in 23S rRNA + S-adenosyl-L-methionine = N(3)-methylpseudouridine(1915) in 23S rRNA + S-adenosyl-L-homocysteine + H(+). Specifically methylates the pseudouridine at position 1915 (m3Psi1915) in 23S rRNA. This chain is Ribosomal RNA large subunit methyltransferase H, found in Chromobacterium violaceum (strain ATCC 12472 / DSM 30191 / JCM 1249 / CCUG 213 / NBRC 12614 / NCIMB 9131 / NCTC 9757 / MK).